The sequence spans 331 residues: MATIACASIIEQQRLRSSNFVIAQYIDLLCIVITFVTTYPAIQLVLNKSLFQWSTKMLILESLFFANLYQIFYGIEAITILYKHHFMTSDFCNIMQTESNCAPYLKVILGTTGGMIFAQTGLMIERTCATFLASYRKRKSEIIGFSITIIVFFCSSITGKLFIWDDPLDGMVLGCFILPKNSYKRYNTYFTVCTVLPLFNLGISILLKIYNTKLEYSSRFEVSARFQKREVIDSTGTVCFLAFSLFILLFIYSVGVGALRHLLHENIISQEDFNLCVVWLYTIPFIAMLLPLLLIYRIRRTRSNRIEMLIEFTKQKQSQENHISQMKNMWS.

The next 7 membrane-spanning stretches (helical) occupy residues 26 to 46 (IDLL…QLVL), 58 to 78 (LILE…IEAI), 104 to 124 (YLKV…GLMI), 142 to 162 (IIGF…GKLF), 189 to 209 (YFTV…LLKI), 238 to 258 (VCFL…GVGA), and 275 to 295 (LCVV…LLLI).

The protein belongs to the nematode receptor-like protein sra family.

The protein resides in the membrane. The chain is Serpentine receptor class alpha-9 (sra-9) from Caenorhabditis elegans.